The following is a 339-amino-acid chain: Dihydroorotate dehydrogenase (quinone) (339 aa).

FMN contacts are provided by residues 62–66 and threonine 86; that span reads AGLDK. Lysine 66 is a substrate binding site. 111–115 contributes to the substrate binding site; the sequence is NRMGF. Residues asparagine 139 and asparagine 172 each contribute to the FMN site. A substrate-binding site is contributed by asparagine 172. Catalysis depends on serine 175, which acts as the Nucleophile. Asparagine 177 contacts substrate. Residues lysine 217 and threonine 245 each coordinate FMN. 246–247 contacts substrate; that stretch reads NT. FMN is bound by residues glycine 268, glycine 297, and 318 to 319; that span reads YS.

It belongs to the dihydroorotate dehydrogenase family. Type 2 subfamily. As to quaternary structure, monomer. It depends on FMN as a cofactor.

The protein localises to the cell membrane. It catalyses the reaction (S)-dihydroorotate + a quinone = orotate + a quinol. The protein operates within pyrimidine metabolism; UMP biosynthesis via de novo pathway; orotate from (S)-dihydroorotate (quinone route): step 1/1. In terms of biological role, catalyzes the conversion of dihydroorotate to orotate with quinone as electron acceptor. The polypeptide is Dihydroorotate dehydrogenase (quinone) (Shewanella amazonensis (strain ATCC BAA-1098 / SB2B)).